We begin with the raw amino-acid sequence, 346 residues long: Small ribosomal subunit biogenesis GTPase RsgA (346 aa).

The segment at 1–26 is disordered; that stretch reads MAKRKLTQNQTRRIQSNNAKTLHRHK. The span at 7-20 shows a compositional bias: polar residues; the sequence is TQNQTRRIQSNNAK. A CP-type G domain is found at 103–271; the sequence is ENEISRPDYY…LIDSPGIREF (169 aa). Residues 159-162 and 213-221 each bind GTP; these read NKVD and GQSGVGKSS. The Zn(2+) site is built by Cys-295, Cys-300, His-302, and Cys-308.

It belongs to the TRAFAC class YlqF/YawG GTPase family. RsgA subfamily. In terms of assembly, monomer. Associates with 30S ribosomal subunit, binds 16S rRNA. It depends on Zn(2+) as a cofactor.

Its subcellular location is the cytoplasm. Its function is as follows. One of several proteins that assist in the late maturation steps of the functional core of the 30S ribosomal subunit. Helps release RbfA from mature subunits. May play a role in the assembly of ribosomal proteins into the subunit. Circularly permuted GTPase that catalyzes slow GTP hydrolysis, GTPase activity is stimulated by the 30S ribosomal subunit. This Haemophilus influenzae (strain PittEE) protein is Small ribosomal subunit biogenesis GTPase RsgA.